Here is a 425-residue protein sequence, read N- to C-terminus: MNIVVVGLSHKTAPVEIREKLSIQEAKMDEAIAHLKSYPHVEEVAVISTCNRLEIYAVVQETEQGVREICQFLAETGQLQLNRLRRYLFTLLHQDAIRHLLRVAAGLESLVLGEGQILAQVKAAHKLGQQHKGLGRLLDRMFKRAITAGKRVRSETNIGTGAVSISSAAVELAQMKVKDLSNQKIAIIGAGKMSRLLVQHLVSKGAEDITIVNRSERGARDLAKKFPDVDLQLELLPEMLNVVEQADIVFTSTGATEPILDRAKLENLDLHTLILIDISVPLNVAADVEEIAGVRLYNVDALKEVVAQNQASRRKMAEEAEALLEEEVENYIQWWQSLETVPTISSLRSKVESIREQELEKALSRLGAEFEEKHQEVIETLTRGIVNKILHDPMVQLRAQQDIEARRVCLQSLQMLFNLETEEAI.

Substrate is bound by residues Thr-49–Arg-52, Ser-109, Glu-114–Gln-116, and Gln-120. The active-site Nucleophile is Cys-50. Gly-189–Ser-194 serves as a coordination point for NADP(+).

Belongs to the glutamyl-tRNA reductase family. As to quaternary structure, homodimer.

The catalysed reaction is (S)-4-amino-5-oxopentanoate + tRNA(Glu) + NADP(+) = L-glutamyl-tRNA(Glu) + NADPH + H(+). Its pathway is porphyrin-containing compound metabolism; protoporphyrin-IX biosynthesis; 5-aminolevulinate from L-glutamyl-tRNA(Glu): step 1/2. It functions in the pathway porphyrin-containing compound metabolism; chlorophyll biosynthesis. In terms of biological role, catalyzes the NADPH-dependent reduction of glutamyl-tRNA(Glu) to glutamate 1-semialdehyde (GSA). This Picosynechococcus sp. (strain ATCC 27264 / PCC 7002 / PR-6) (Agmenellum quadruplicatum) protein is Glutamyl-tRNA reductase.